The primary structure comprises 567 residues: Urease subunit alpha (567 aa).

The Urease domain maps to 129 to 567 (GGVDTHIHFI…LPMAQRYFLF (439 aa)). Ni(2+) is bound by residues H134, H136, and K217. K217 carries the post-translational modification N6-carboxylysine. H219 lines the substrate pocket. Positions 246 and 272 each coordinate Ni(2+). The active-site Proton donor is the H320. Position 360 (D360) interacts with Ni(2+).

This sequence belongs to the metallo-dependent hydrolases superfamily. Urease alpha subunit family. In terms of assembly, heterotrimer of UreA (gamma), UreB (beta) and UreC (alpha) subunits. Three heterotrimers associate to form the active enzyme. Requires Ni cation as cofactor. In terms of processing, carboxylation allows a single lysine to coordinate two nickel ions.

The protein resides in the cytoplasm. It carries out the reaction urea + 2 H2O + H(+) = hydrogencarbonate + 2 NH4(+). Its pathway is nitrogen metabolism; urea degradation; CO(2) and NH(3) from urea (urease route): step 1/1. The sequence is that of Urease subunit alpha from Proteus hauseri.